A 623-amino-acid chain; its full sequence is UvrABC system protein C (623 aa).

The GIY-YIG domain maps to Phe12–Ile91. The 36-residue stretch at Ser201–Ile236 folds into the UVR domain. The tract at residues Pro604–Ala623 is disordered.

The protein belongs to the UvrC family. In terms of assembly, interacts with UvrB in an incision complex.

The protein resides in the cytoplasm. In terms of biological role, the UvrABC repair system catalyzes the recognition and processing of DNA lesions. UvrC both incises the 5' and 3' sides of the lesion. The N-terminal half is responsible for the 3' incision and the C-terminal half is responsible for the 5' incision. The chain is UvrABC system protein C from Solibacter usitatus (strain Ellin6076).